The sequence spans 248 residues: Probable transcriptional regulatory protein RPB_4273 (248 aa).

Positions 1-22 (MAGHSQFKNIMHRKGKQDAQRS) are disordered.

Belongs to the TACO1 family.

The protein resides in the cytoplasm. This chain is Probable transcriptional regulatory protein RPB_4273, found in Rhodopseudomonas palustris (strain HaA2).